Here is a 506-residue protein sequence, read N- to C-terminus: Cobyric acid synthase (506 aa).

The GATase cobBQ-type domain occupies D251 to F448. C332 functions as the Nucleophile in the catalytic mechanism. H440 is an active-site residue.

It belongs to the CobB/CobQ family. CobQ subfamily.

Its pathway is cofactor biosynthesis; adenosylcobalamin biosynthesis. In terms of biological role, catalyzes amidations at positions B, D, E, and G on adenosylcobyrinic A,C-diamide. NH(2) groups are provided by glutamine, and one molecule of ATP is hydrogenolyzed for each amidation. This Salmonella choleraesuis (strain SC-B67) protein is Cobyric acid synthase.